We begin with the raw amino-acid sequence, 302 residues long: Lysosomal thioesterase PPT2 (302 aa).

The N-terminal stretch at 1-27 (MPGLWRQRLPSAWALLLLPFLPLLLPA) is a signal peptide. A glycan (N-linked (GlcNAc...) asparagine) is linked at Asn60. 2 cysteine pairs are disulfide-bonded: Cys109-Cys117 and Cys165-Cys176. Ser111 acts as the Nucleophile in catalysis. N-linked (GlcNAc...) asparagine glycosylation is found at Asn190 and Asn206. Asp228 is a catalytic residue. A glycan (N-linked (GlcNAc...) asparagine) is linked at Asn245. Cys276 and Cys296 are disulfide-bonded. Residue His283 is part of the active site. Asn289 carries an N-linked (GlcNAc...) asparagine glycan.

It belongs to the palmitoyl-protein thioesterase family.

It is found in the lysosome. The enzyme catalyses hexadecanoyl-CoA + H2O = hexadecanoate + CoA + H(+). The catalysed reaction is S-hexadecanoyl-N-acetylcysteamine + H2O = N-acetylcysteamine + hexadecanoate + H(+). Catalyzes the cleavage of thioester bonds from S-palmitoyl-CoA or S-palmitoyl-N-acetylcysteamine (unbranched structures) but does not have activity against palmitoylcysteine or palmitoylated proteins, branched structures or bulky head groups. Conversely, hydrolyzes both long and short chain fatty acyl-CoA substrate. In Rattus norvegicus (Rat), this protein is Lysosomal thioesterase PPT2 (Ppt2).